A 362-amino-acid polypeptide reads, in one-letter code: 3-dehydroquinate synthase (362 aa).

NAD(+) contacts are provided by residues Asp-71 to Lys-76, Gly-105 to Asp-109, Thr-129 to Thr-130, Lys-142, Lys-151, and Cys-169 to Thr-172. Zn(2+) is bound by residues Glu-184, His-247, and His-264.

The protein belongs to the sugar phosphate cyclases superfamily. Dehydroquinate synthase family. Requires Co(2+) as cofactor. The cofactor is Zn(2+). NAD(+) serves as cofactor.

The protein localises to the cytoplasm. It carries out the reaction 7-phospho-2-dehydro-3-deoxy-D-arabino-heptonate = 3-dehydroquinate + phosphate. It functions in the pathway metabolic intermediate biosynthesis; chorismate biosynthesis; chorismate from D-erythrose 4-phosphate and phosphoenolpyruvate: step 2/7. Functionally, catalyzes the conversion of 3-deoxy-D-arabino-heptulosonate 7-phosphate (DAHP) to dehydroquinate (DHQ). The polypeptide is 3-dehydroquinate synthase (Escherichia coli (strain K12 / MC4100 / BW2952)).